The chain runs to 324 residues: ATP-dependent 6-phosphofructokinase (324 aa).

Position 11 (G11) interacts with ATP. An ADP-binding site is contributed by 21-25; it reads RAVVR. ATP-binding positions include 72 to 73 and 102 to 105; these read RE and GNGS. Position 103 (N103) interacts with Mg(2+). 126-128 contacts substrate; sequence TID. D128 serves as the catalytic Proton acceptor. Residue K155 participates in ADP binding. Substrate is bound by residues R163 and 170 to 172; that span reads MGR. Residues 186-188 and 214-216 each bind ADP; these read GAE and KNF. Residues E223, R248, and 254 to 257 each bind substrate; that span reads YIQR.

The protein belongs to the phosphofructokinase type A (PFKA) family. ATP-dependent PFK group I subfamily. Prokaryotic clade 'B1' sub-subfamily. As to quaternary structure, homotetramer. Mg(2+) is required as a cofactor.

It is found in the cytoplasm. It catalyses the reaction beta-D-fructose 6-phosphate + ATP = beta-D-fructose 1,6-bisphosphate + ADP + H(+). Its pathway is carbohydrate degradation; glycolysis; D-glyceraldehyde 3-phosphate and glycerone phosphate from D-glucose: step 3/4. Its activity is regulated as follows. Allosterically activated by ADP and other diphosphonucleosides, and allosterically inhibited by phosphoenolpyruvate. Functionally, catalyzes the phosphorylation of D-fructose 6-phosphate to fructose 1,6-bisphosphate by ATP, the first committing step of glycolysis. The chain is ATP-dependent 6-phosphofructokinase from Sulfurihydrogenibium sp. (strain YO3AOP1).